We begin with the raw amino-acid sequence, 363 residues long: Peptide chain release factor 1 (363 aa).

Position 237 is an N5-methylglutamine (Gln-237). A compositionally biased stretch (basic and acidic residues) spans 284–297 (ERAKQQSERSEQRR). Positions 284–306 (ERAKQQSERSEQRRLAVGSGDRS) are disordered.

This sequence belongs to the prokaryotic/mitochondrial release factor family. Methylated by PrmC. Methylation increases the termination efficiency of RF1.

The protein resides in the cytoplasm. In terms of biological role, peptide chain release factor 1 directs the termination of translation in response to the peptide chain termination codons UAG and UAA. This chain is Peptide chain release factor 1, found in Halorhodospira halophila (strain DSM 244 / SL1) (Ectothiorhodospira halophila (strain DSM 244 / SL1)).